Consider the following 161-residue polypeptide: Endoribonuclease YbeY (161 aa).

Zn(2+) is bound by residues H120, H124, and D130.

The protein belongs to the endoribonuclease YbeY family. The cofactor is Zn(2+).

It is found in the cytoplasm. In terms of biological role, single strand-specific metallo-endoribonuclease involved in late-stage 70S ribosome quality control and in maturation of the 3' terminus of the 16S rRNA. This chain is Endoribonuclease YbeY, found in Chlamydia muridarum (strain MoPn / Nigg).